The primary structure comprises 101 residues: MTALFCLELRTNIFLIMNDCIIINYWKGFIFSFHSYFFPFRFESSLRAHYPGKRNYSDFSVIPLPYYIDVRSFHICESQHIIALPLQIPLPYRMLIRMYPV.

The protein resides in the cytoplasm. This is an uncharacterized protein from Saccharomyces cerevisiae (strain ATCC 204508 / S288c) (Baker's yeast).